Consider the following 466-residue polypeptide: 3-isopropylmalate dehydratase large subunit (466 aa).

3 residues coordinate [4Fe-4S] cluster: cysteine 347, cysteine 407, and cysteine 410.

This sequence belongs to the aconitase/IPM isomerase family. LeuC type 1 subfamily. Heterodimer of LeuC and LeuD. It depends on [4Fe-4S] cluster as a cofactor.

The enzyme catalyses (2R,3S)-3-isopropylmalate = (2S)-2-isopropylmalate. It participates in amino-acid biosynthesis; L-leucine biosynthesis; L-leucine from 3-methyl-2-oxobutanoate: step 2/4. In terms of biological role, catalyzes the isomerization between 2-isopropylmalate and 3-isopropylmalate, via the formation of 2-isopropylmaleate. The protein is 3-isopropylmalate dehydratase large subunit of Serratia proteamaculans (strain 568).